The primary structure comprises 306 residues: Cytochrome P450 monooxygenase aclO (306 aa).

C237 is a heme binding site.

It belongs to the cytochrome P450 family. It depends on heme as a cofactor.

It functions in the pathway mycotoxin biosynthesis. Cytochrome P450 monooxygenase; part of the gene cluster that mediates the biosynthesis of aspirochlorine (or antibiotic A30641), an unusual halogenated spiro compound with distinctive antifungal properties due to selective inhibition of protein biosynthesis, and which is also active against bacteria, viruses, and murine tumor cells. The non-ribosomal peptide synthetase (NRPS) aclP is responsible the formation of the diketopiperazine (DKP) core from the condensation of 2 phenylalanine residues. One Phe residue is tailored into chlorotyrosine by hydroxylation and chlorination, whereas the second Phe undergoes an unprecedented C-C bond cleavage to be converted into glycine. After formation of the DKP, sulfur is incorporated into the DKP by conjugation with glutathione by aclG, followed by its stepwise degradation to the thiol by aclI, aclJ and aclK, and the dithiol oxidation by aclT. In addition, oxygenases (aclB, aclC, aclL and aclO) and O-methyltransferases (aclM and aclU) act as tailoring enzymes to produce the intermediate dechloroaspirochlorine. Ultimately, chlorination of dechloroaspirochlorine by the halogenase aclH is the last step in the aspirochlorine pathway. The polypeptide is Cytochrome P450 monooxygenase aclO (Aspergillus oryzae (strain ATCC 42149 / RIB 40) (Yellow koji mold)).